A 529-amino-acid chain; its full sequence is NAD(P)H-quinone oxidoreductase chain 4 1 (529 aa).

13 helical membrane-spanning segments follow: residues 4-24, 36-56, 91-111, 115-135, 137-157, 169-189, 209-229, 243-263, 277-297, 314-334, 335-355, 387-407, and 417-437; these read FPWL…IPFI, WYAL…FTNF, LILL…PVTL, LFYF…AVQD, LVFF…LAIW, FILY…AMAF, GFQL…LPIV, TAPV…YALI, FAPV…LTSY, IGFV…GAVL, QMVS…ATYD, LALP…GFAT, and VIVV…LLSM.

This sequence belongs to the complex I subunit 4 family.

It is found in the cellular thylakoid membrane. The catalysed reaction is a plastoquinone + NADH + (n+1) H(+)(in) = a plastoquinol + NAD(+) + n H(+)(out). It carries out the reaction a plastoquinone + NADPH + (n+1) H(+)(in) = a plastoquinol + NADP(+) + n H(+)(out). NDH-1 shuttles electrons from NAD(P)H, via FMN and iron-sulfur (Fe-S) centers, to quinones in the respiratory chain. The immediate electron acceptor for the enzyme in this species is believed to be plastoquinone. Couples the redox reaction to proton translocation (for every two electrons transferred, four hydrogen ions are translocated across the cytoplasmic membrane), and thus conserves the redox energy in a proton gradient. The sequence is that of NAD(P)H-quinone oxidoreductase chain 4 1 from Thermosynechococcus vestitus (strain NIES-2133 / IAM M-273 / BP-1).